The chain runs to 1331 residues: ABC multidrug transporter MDR2 (1331 aa).

Composition is skewed to basic and acidic residues over residues 1 to 20 (MVEV…KQEN) and 31 to 41 (SDKEKVAKKGN). A disordered region spans residues 1–51 (MVEVSEKPNTQDDGVSKQENRNPASSSSSTSDKEKVAKKGNSDATKSSTPE). 4 helical membrane-spanning segments follow: residues 93-113 (MIFL…LPLF), 147-167 (YFVY…VGFI), 219-239 (KVGL…IGYV), and 242-262 (WKLA…MGGI). An ABC transmembrane type-1 1 domain is found at 97–387 (AIVSLASIAA…VAPNTQAFAS (291 aa)). The N-linked (GlcNAc...) asparagine glycan is linked to Asn-293. 2 consecutive transmembrane segments (helical) span residues 325–345 (LGIM…LGFW) and 358–378 (LSAI…IGNV). In terms of domain architecture, ABC transporter 1 spans 422 to 667 (IEFRGIKHIY…KGTYLQLVEA (246 aa)). Residue 457–464 (GPSGSGKS) participates in ATP binding. Asn-529 and Asn-737 each carry an N-linked (GlcNAc...) asparagine glycan. Helical transmembrane passes span 762–782 (LCGF…SVFF) and 810–830 (FLML…IFAI). Positions 764-1051 (GFFFAVLSGA…VFSFSPDMGK (288 aa)) constitute an ABC transmembrane type-1 2 domain. N-linked (GlcNAc...) asparagine glycosylation occurs at Asn-860. 4 consecutive transmembrane segments (helical) span residues 884 to 904 (LGTI…ALAF), 910 to 930 (LVCI…FWIL), 995 to 1015 (ASQS…GGLL), and 1025 to 1045 (FFLC…VFSF). Positions 1086 to 1324 (IEFRDVHFRY…KGRYYELVHM (239 aa)) constitute an ABC transporter 2 domain. Asn-1108 is a glycosylation site (N-linked (GlcNAc...) asparagine). 1121–1128 (GPSGCGKS) contributes to the ATP binding site.

Belongs to the ABC transporter superfamily. ABCB family. Multidrug resistance exporter (TC 3.A.1.201) subfamily.

The protein resides in the cell membrane. The catalysed reaction is itraconazole(in) + ATP + H2O = itraconazole(out) + ADP + phosphate + H(+). Its function is as follows. Pleiotropic ABC efflux transporter that may be involved in the modulation susceptibility to a wide range of unrelated cytotoxic compounds. The polypeptide is ABC multidrug transporter MDR2 (Trichophyton equinum (strain ATCC MYA-4606 / CBS 127.97) (Horse ringworm fungus)).